A 110-amino-acid chain; its full sequence is Iron-sulfur cluster assembly protein CyaY (110 aa).

It belongs to the frataxin family.

Its function is as follows. Involved in iron-sulfur (Fe-S) cluster assembly. May act as a regulator of Fe-S biogenesis. The polypeptide is Iron-sulfur cluster assembly protein CyaY (Pseudomonas fluorescens (strain ATCC BAA-477 / NRRL B-23932 / Pf-5)).